The sequence spans 289 residues: Glycerol facilitator-aquaporin gla (289 aa).

A run of 2 helical transmembrane segments spans residues 10–30 (ITEF…VANV) and 41–61 (SWMI…VAFG). An NPA 1 motif is present at residues 68–70 (NPA). A run of 3 helical transmembrane segments spans residues 87–107 (AQYI…IVMV), 151–171 (FVGS…FFGS), and 209–229 (MVAH…LGGP). An NPA 2 motif is present at residues 235-237 (NPA). The chain crosses the membrane as a helical span at residues 264–284 (WYAWVPVLAPILASLAAVALF).

It belongs to the MIP/aquaporin (TC 1.A.8) family.

It localises to the cell membrane. Mixed channel protein that transports both water and glycerol. This Lactococcus lactis subsp. lactis (strain IL1403) (Streptococcus lactis) protein is Glycerol facilitator-aquaporin gla (gla).